A 162-amino-acid polypeptide reads, in one-letter code: MERILENAMYASRWLLAPIYFGLSLGLLALALKFFQEVVHVLPNVFALSEADLILVILSLIDMSLVGGLLVMVMISGYENFVSQLDIDESKEKLNWLGKMDSSSLKMKVAASIVAISSIHLLRVFMDAQNISTDYLMWYVIIHMTFVVSAFCMGYLDKLTKH.

4 helical membrane-spanning segments follow: residues 15–35 (LLAPIYFGLSLGLLALALKFF), 53–73 (LILVILSLIDMSLVGGLLVMV), 109–126 (VAASIVAISSIHLLRVFM), and 136–156 (LMWYVIIHMTFVVSAFCMGYL).

It belongs to the UPF0114 family.

It localises to the cell membrane. The sequence is that of UPF0114 protein Pput_0713 from Pseudomonas putida (strain ATCC 700007 / DSM 6899 / JCM 31910 / BCRC 17059 / LMG 24140 / F1).